A 247-amino-acid chain; its full sequence is Probable cyclic nucleotide phosphodiesterase XBJ1_0953 (247 aa).

Residues Asp8, His10, Asp52, Asn82, His154, His192, and His194 each coordinate Fe cation. Residues His10, Asp52, and Asn82–His83 each bind AMP. AMP is bound at residue His194.

The protein belongs to the cyclic nucleotide phosphodiesterase class-III family. Fe(2+) is required as a cofactor.

The chain is Probable cyclic nucleotide phosphodiesterase XBJ1_0953 from Xenorhabdus bovienii (strain SS-2004) (Xenorhabdus nematophila subsp. bovienii).